The sequence spans 310 residues: Probable cell division protein WhiA (310 aa).

Residues 277–310 (SLKELAEQVPDGPISKSGVNHRLKKLHEIAENLR) constitute a DNA-binding region (H-T-H motif).

It belongs to the WhiA family.

In terms of biological role, involved in cell division and chromosome segregation. The sequence is that of Probable cell division protein WhiA from Lactobacillus delbrueckii subsp. bulgaricus (strain ATCC BAA-365 / Lb-18).